The sequence spans 476 residues: Adenylosuccinate synthetase, chloroplastic (476 aa).

Low complexity predominate over residues alanine 1–serine 20. The interval alanine 1–alanine 34 is disordered. GTP contacts are provided by residues glycine 63–lysine 69 and glycine 91–threonine 93. The active-site Proton acceptor is aspartate 64. Aspartate 64 and glycine 91 together coordinate Mg(2+). IMP contacts are provided by residues aspartate 64 to lysine 67, asparagine 89 to histidine 92, threonine 181, arginine 195, glutamine 275, threonine 290, and arginine 354. Histidine 92 serves as the catalytic Proton donor. Substrate is bound at residue threonine 350–arginine 356. Residues arginine 356, lysine 382–aspartate 384, and glycine 465–glycine 467 contribute to the GTP site.

Belongs to the adenylosuccinate synthetase family. As to quaternary structure, homodimer. The cofactor is Mg(2+).

It is found in the plastid. Its subcellular location is the chloroplast. It carries out the reaction IMP + L-aspartate + GTP = N(6)-(1,2-dicarboxyethyl)-AMP + GDP + phosphate + 2 H(+). It participates in purine metabolism; AMP biosynthesis via de novo pathway; AMP from IMP: step 1/2. In terms of biological role, plays an important role in the de novo pathway and in the salvage pathway of purine nucleotide biosynthesis. Catalyzes the first committed step in the biosynthesis of AMP from IMP. In Triticum aestivum (Wheat), this protein is Adenylosuccinate synthetase, chloroplastic.